A 110-amino-acid polypeptide reads, in one-letter code: Phosphoribosyl-ATP pyrophosphatase (110 aa).

Belongs to the PRA-PH family.

The protein resides in the cytoplasm. It catalyses the reaction 1-(5-phospho-beta-D-ribosyl)-ATP + H2O = 1-(5-phospho-beta-D-ribosyl)-5'-AMP + diphosphate + H(+). The protein operates within amino-acid biosynthesis; L-histidine biosynthesis; L-histidine from 5-phospho-alpha-D-ribose 1-diphosphate: step 2/9. The polypeptide is Phosphoribosyl-ATP pyrophosphatase (Pseudomonas fluorescens (strain SBW25)).